A 323-amino-acid polypeptide reads, in one-letter code: Cysteine synthase A (323 aa).

Positions 8 and 35 each coordinate hydrogen sulfide. Lys42 bears the N6-(pyridoxal phosphate)lysine mark. Residues Asn72 and 177 to 181 contribute to the pyridoxal 5'-phosphate site; that span reads GTGGT. Leu269 is a hydrogen sulfide binding site. Residue Ser273 coordinates pyridoxal 5'-phosphate.

The protein belongs to the cysteine synthase/cystathionine beta-synthase family. In terms of assembly, homodimer. Requires pyridoxal 5'-phosphate as cofactor.

It catalyses the reaction O-acetyl-L-serine + hydrogen sulfide = L-cysteine + acetate. It participates in amino-acid biosynthesis; L-cysteine biosynthesis; L-cysteine from L-serine: step 2/2. This is Cysteine synthase A (cysK) from Escherichia coli O157:H7.